The sequence spans 610 residues: Butyryl-CoA dehydrogenase Swol_2052 (610 aa).

The Proton acceptor role is filled by glutamate 451.

The protein belongs to the acyl-CoA dehydrogenase family. FAD serves as cofactor.

It is found in the cytoplasm. The catalysed reaction is butanoyl-CoA + oxidized [electron-transfer flavoprotein] + H(+) = (2E)-butenoyl-CoA + reduced [electron-transfer flavoprotein]. The enzyme catalyses a short-chain 2,3-saturated fatty acyl-CoA + oxidized [electron-transfer flavoprotein] + H(+) = a short-chain (2E)-enoyl-CoA + reduced [electron-transfer flavoprotein]. The protein operates within lipid metabolism; butanoate metabolism. Its function is as follows. Involved in syntrophic growth of S.wolfei with butyrate, as part of the butyrate oxidation pathway. Catalyzes the oxidation of butanoyl-CoA to crotonyl-CoA. Probably passes the electrons released by this reaction on to electron-transfer flavoproteins (EtfAB) to finally generate hydrogen and/or formate. This Syntrophomonas wolfei subsp. wolfei (strain DSM 2245B / Goettingen) protein is Butyryl-CoA dehydrogenase Swol_2052.